We begin with the raw amino-acid sequence, 445 residues long: Phosphoglucosamine mutase 1 (445 aa).

The active-site Phosphoserine intermediate is the Ser-102. Positions 102, 241, 243, and 245 each coordinate Mg(2+). At Ser-102 the chain carries Phosphoserine.

Belongs to the phosphohexose mutase family. Mg(2+) serves as cofactor. Post-translationally, activated by phosphorylation.

It carries out the reaction alpha-D-glucosamine 1-phosphate = D-glucosamine 6-phosphate. Functionally, catalyzes the conversion of glucosamine-6-phosphate to glucosamine-1-phosphate. In Shewanella sp. (strain MR-4), this protein is Phosphoglucosamine mutase 1.